The following is a 75-amino-acid chain: UPF0291 protein LMOf2365_1322 (75 aa).

The interval 56–75 (DPNGTDVTPHKVKQLRKNKH) is disordered. The span at 65-75 (HKVKQLRKNKH) shows a compositional bias: basic residues.

Belongs to the UPF0291 family.

The protein resides in the cytoplasm. This is UPF0291 protein LMOf2365_1322 from Listeria monocytogenes serotype 4b (strain F2365).